A 276-amino-acid polypeptide reads, in one-letter code: Large ribosomal subunit protein uL2 (276 aa).

Disordered regions lie at residues 29 to 55 and 219 to 276; these read PEKS…RHRG and HVRG…RRTR. Over residues 259-276 the composition is skewed to basic residues; sequence TRNKKKQSSKLIVRRRTR.

It belongs to the universal ribosomal protein uL2 family. In terms of assembly, part of the 50S ribosomal subunit. Forms a bridge to the 30S subunit in the 70S ribosome.

Functionally, one of the primary rRNA binding proteins. Required for association of the 30S and 50S subunits to form the 70S ribosome, for tRNA binding and peptide bond formation. It has been suggested to have peptidyltransferase activity; this is somewhat controversial. Makes several contacts with the 16S rRNA in the 70S ribosome. This is Large ribosomal subunit protein uL2 from Rippkaea orientalis (strain PCC 8801 / RF-1) (Cyanothece sp. (strain PCC 8801)).